We begin with the raw amino-acid sequence, 362 residues long: MMMSNLPKDLVEEILSRVPFKYLRAIRSTCKNWYDLSKNRSFANKNIDKAAVSGEKEFLMITQFNVFWVGVNLHRSQNNSFDLSIQLKAKIVSRDKKDDLFQKSQVIHCNGVFLCVREKMLVVLNPYWGQTKRIMPRPPFGCFDRYALGYDKSSGSHKILRLFGVNQNNLNIYDLSSSSWMIPDGTLERDMEYMKQGVSLNGDTYWYAKDKESIDWYLLCFDFTRERFGTPLPLPFSNEGYTLHKGYKSLSALKEEKLAVLLWDTMVIWVTNKIEPDAVSWSIFLKLDMEPSIYCRYGNFFIDEEKKVAVVFEKDSSSWSWMYNPNYNKAYIAGENGYFKSVNLLKSPNTLQLGHLVCSYAL.

Residues 1–50 (MMMSNLPKDLVEEILSRVPFKYLRAIRSTCKNWYDLSKNRSFANKNIDKA) enclose the F-box domain. Kelch repeat units lie at residues 150–201 (YDKS…VSLN) and 293–341 (IYCR…YFKS).

This Arabidopsis thaliana (Mouse-ear cress) protein is Putative F-box/kelch-repeat protein At3g20710.